Consider the following 154-residue polypeptide: Protein X (154 aa).

Residues 68–117 are mitochondrial targeting sequence; sequence PCALRFTSARRMETTVNAHQVLPKVLHKRTLGLSAMSTTDLEAYFKDCLF.

Belongs to the orthohepadnavirus protein X family. In terms of assembly, may form homodimer. May interact with host CEBPA, CFLAR, CREB1, DDB1, E4F1, HBXIP, HSPD1/HSP60, NFKBIA, POLR2E and SMAD4. Interacts with host SMC5-SMC6 complex and induces its degradation. Interacts with host TRPC4AP; leading to prevent ubiquitination of TRPC4AP. Interacts with host PLSCR1; this interaction promotes ubiquitination and degradation of HBx and impairs HBx-mediated cell proliferation. Post-translationally, a fraction may be phosphorylated in insect cells and HepG2 cells, a human hepatoblastoma cell line. Phosphorylated in vitro by host protein kinase C or mitogen-activated protein kinase. N-acetylated in insect cells.

The protein localises to the host cytoplasm. Its subcellular location is the host nucleus. It is found in the host mitochondrion. In terms of biological role, multifunctional protein that plays a role in silencing host antiviral defenses and promoting viral transcription. Does not seem to be essential for HBV infection. May be directly involved in development of cirrhosis and liver cancer (hepatocellular carcinoma). Most of cytosolic activities involve modulation of cytosolic calcium. The effect on apoptosis is controversial depending on the cell types in which the studies have been conducted. May induce apoptosis by localizing in mitochondria and causing loss of mitochondrial membrane potential. May also modulate apoptosis by binding host CFLAR, a key regulator of the death-inducing signaling complex (DISC). Promotes viral transcription by using the host E3 ubiquitin ligase DDB1 to target the SMC5-SMC6 complex to proteasomal degradation. This host complex would otherwise bind to viral episomal DNA, and prevents its transcription. Moderately stimulates transcription of many different viral and cellular transcription elements. Promoters and enhancers stimulated by HBx contain DNA binding sites for NF-kappa-B, AP-1, AP-2, c-EBP, ATF/CREB, or the calcium-activated factor NF-AT. The protein is Protein X of Hepatitis B virus genotype C subtype adr (isolate Japan/Nishioka/1983) (HBV-C).